A 96-amino-acid chain; its full sequence is Large ribosomal subunit protein eL43 (96 aa).

The C4-type zinc-finger motif lies at 41 to 62 (CPVCAFPKLKRAGTSIWVCDKC).

It belongs to the eukaryotic ribosomal protein eL43 family. Zn(2+) is required as a cofactor.

The chain is Large ribosomal subunit protein eL43 from Methanococcus vannielii (strain ATCC 35089 / DSM 1224 / JCM 13029 / OCM 148 / SB).